A 208-amino-acid chain; its full sequence is NAD(P)H-quinone oxidoreductase subunit M, chloroplastic (208 aa).

Residues 1–21 (MAATSSYTACTKFSMLGWIGG) constitute a chloroplast transit peptide. The segment covering 37 to 49 (QQAEVEESQQVNA) has biased composition (low complexity). The segment at 37–70 (QQAEVEESQQVNAQEEEQEKMKQQGKQKLPRPVE) is disordered.

This sequence belongs to the NDH complex subunit M family. Part of the chloroplast NDH complex, composed of a mixture of chloroplast and nucleus encoded subunits. Component of the NDH subcomplex A, at least composed of ndhH, ndhI, ndhJ, ndhK, ndhL, ndhM, ndhN and ndhO.

The protein localises to the plastid. The protein resides in the chloroplast thylakoid membrane. It catalyses the reaction a plastoquinone + NADH + (n+1) H(+)(in) = a plastoquinol + NAD(+) + n H(+)(out). It carries out the reaction a plastoquinone + NADPH + (n+1) H(+)(in) = a plastoquinol + NADP(+) + n H(+)(out). Functionally, NDH shuttles electrons from NAD(P)H:plastoquinone, via FMN and iron-sulfur (Fe-S) centers, to quinones in the photosynthetic chain and possibly in a chloroplast respiratory chain. The immediate electron acceptor for the enzyme in this species is believed to be plastoquinone. Couples the redox reaction to proton translocation, and thus conserves the redox energy in a proton gradient. The polypeptide is NAD(P)H-quinone oxidoreductase subunit M, chloroplastic (Vitis vinifera (Grape)).